The primary structure comprises 224 residues: Cytosolic-abundant heat soluble protein 77580 (224 aa).

Residues 1-13 (MSNYQQESSYQYS) are compositionally biased toward low complexity. A disordered region spans residues 1–38 (MSNYQQESSYQYSDRSNNGQQQEQQEKKEVEHSSYTHT). The segment covering 24-38 (QQEKKEVEHSSYTHT) has biased composition (basic and acidic residues). Residues 83–191 (VIDTEAETEE…KRVLERSKFH (109 aa)) are a coiled coil. CAHS motif regions lie at residues 122-140 (YRKQQEVETEKIRKELEKQ) and 159-177 (QKRQIDLEARYAKKELERE). Residues 200–215 (AAAGSTHSGSSSVAVS) are compositionally biased toward low complexity. The tract at residues 200 to 224 (AAAGSTHSGSSSVAVSESEKFQTNN) is disordered.

Belongs to the Cytosolic-abundant heat soluble protein (CAHS) family.

It localises to the cytoplasm. Its function is as follows. CAHS proteins are cytosolic heat soluble proteins that seem to contribute to the anhydrobiosis in tardigrades, but their specific mechanisms are yet to be identified. It is possible that protection during anhydrobiosis might occur via the stabilization of vitrifying small molecules such as sugars, but not via the direct glass transition of CAHS proteins themselves. In Hypsibius exemplaris (Freshwater tardigrade), this protein is Cytosolic-abundant heat soluble protein 77580.